The primary structure comprises 373 residues: Phosphoserine aminotransferase (373 aa).

An L-glutamate-binding site is contributed by Arg-46. Pyridoxal 5'-phosphate contacts are provided by Phe-104, Thr-150, Asp-172, and Gln-195. Lys-196 carries the post-translational modification N6-(pyridoxal phosphate)lysine. A pyridoxal 5'-phosphate-binding site is contributed by 247–248 (NT).

The protein belongs to the class-V pyridoxal-phosphate-dependent aminotransferase family. SerC subfamily. In terms of assembly, homodimer. It depends on pyridoxal 5'-phosphate as a cofactor.

Its subcellular location is the cytoplasm. It catalyses the reaction O-phospho-L-serine + 2-oxoglutarate = 3-phosphooxypyruvate + L-glutamate. The enzyme catalyses 4-(phosphooxy)-L-threonine + 2-oxoglutarate = (R)-3-hydroxy-2-oxo-4-phosphooxybutanoate + L-glutamate. Its pathway is amino-acid biosynthesis; L-serine biosynthesis; L-serine from 3-phospho-D-glycerate: step 2/3. It participates in cofactor biosynthesis; pyridoxine 5'-phosphate biosynthesis; pyridoxine 5'-phosphate from D-erythrose 4-phosphate: step 3/5. In terms of biological role, catalyzes the reversible conversion of 3-phosphohydroxypyruvate to phosphoserine and of 3-hydroxy-2-oxo-4-phosphonooxybutanoate to phosphohydroxythreonine. The protein is Phosphoserine aminotransferase of Rhodococcus jostii (strain RHA1).